Here is a 215-residue protein sequence, read N- to C-terminus: Soluble inorganic pyrophosphatase (215 aa).

The segment covering 1–21 (MSQEDSTSAAAAQQPTSRPAP) has biased composition (low complexity). Residues 1-24 (MSQEDSTSAAAAQQPTSRPAPKLN) form a disordered region. Mg(2+) contacts are provided by D103, D108, and D140.

It belongs to the PPase family. Mg(2+) serves as cofactor. In terms of tissue distribution, expressed in metabolically active tissue such as root, shoot, embryo and aleurone.

The protein localises to the cytoplasm. It catalyses the reaction diphosphate + H2O = 2 phosphate + H(+). In terms of biological role, may play a role in germination. This chain is Soluble inorganic pyrophosphatase (IPP), found in Hordeum vulgare subsp. vulgare (Domesticated barley).